The primary structure comprises 115 residues: uncharacterized protein (115 aa).

Positions 1–29 (MKKAMAILAVLAAAAVICGLLFFHNDVTD) are cleaved as a signal peptide.

This is an uncharacterized protein from Bacillus subtilis (strain 168).